Here is a 232-residue protein sequence, read N- to C-terminus: Multiple organellar RNA editing factor 6, mitochondrial (232 aa).

The N-terminal 67 residues, 1 to 67 (MAKTLSRSTA…TIRTRMDRSG (67 aa)), are a transit peptide targeting the mitochondrion. The segment at 208–232 (TNQRGSDKPKYHDRIRNVRRRENMR) is disordered. Residues 212–232 (GSDKPKYHDRIRNVRRRENMR) are compositionally biased toward basic and acidic residues.

This sequence belongs to the MORF family. Heterodimers with MORF8/RIP1, MORF3/RIP3, MORF6/RIP6, MORF7/RIP7 and MORF9/RIP9.

The protein resides in the mitochondrion. Functionally, involved in organellar RNA editing. Required for the processing of few RNA editing sites in mitochondria. The sequence is that of Multiple organellar RNA editing factor 6, mitochondrial from Arabidopsis thaliana (Mouse-ear cress).